A 912-amino-acid polypeptide reads, in one-letter code: Protein translocase subunit SecA (912 aa).

ATP-binding positions include Q87, 105–109 (GEGKT), and D508. The segment at 864-912 (AEEEVEQMQGGNAPVPVSQVTRDEPKVGRNDPCPCGSGKKYKHCHGQLS) is disordered. C896, C898, C907, and H908 together coordinate Zn(2+). Positions 902–912 (KKYKHCHGQLS) are enriched in basic residues.

Belongs to the SecA family. As to quaternary structure, monomer and homodimer. Part of the essential Sec protein translocation apparatus which comprises SecA, SecYEG and auxiliary proteins SecDF-YajC and YidC. The cofactor is Zn(2+).

Its subcellular location is the cell inner membrane. The protein resides in the cytoplasm. The enzyme catalyses ATP + H2O + cellular proteinSide 1 = ADP + phosphate + cellular proteinSide 2.. Part of the Sec protein translocase complex. Interacts with the SecYEG preprotein conducting channel. Has a central role in coupling the hydrolysis of ATP to the transfer of proteins into and across the cell membrane, serving both as a receptor for the preprotein-SecB complex and as an ATP-driven molecular motor driving the stepwise translocation of polypeptide chains across the membrane. This chain is Protein translocase subunit SecA, found in Xanthomonas euvesicatoria pv. vesicatoria (strain 85-10) (Xanthomonas campestris pv. vesicatoria).